Consider the following 637-residue polypeptide: Acyl-CoA ligase cm3C (637 aa).

Residues 282 to 290 (TSGTSGRQK), 423 to 428 (HAWGLT), Asp-507, Arg-526, and Lys-624 contribute to the ATP site. Positions 353–423 (DMQRMLGSVA…SLQPSWEFLH (71 aa)) are SBD1. The segment at 424–486 (AWGLTETCIV…YKAPNMFVGY (63 aa)) is SBD2.

This sequence belongs to the ATP-dependent AMP-binding enzyme family.

Its pathway is secondary metabolite biosynthesis. Its function is as follows. Acyl-CoA ligase; part of the gene cluster that mediates the biosynthesis of beauveriolides I and III, cyclodepsipeptides acting as inhibitors of the acyl-CoA:cholesterol acyltransferase. The HR-PKS cm3B initiates the biosynthesis of beauveriolides by iteratively catalyzing the formation of the linear polyketide chain. The ATP-dependent acetyl-CoA ligase cm3D converts the polyketide carboxylic acid to a CoA thioester which id shuttled to the first T domain in the NRPS cm3A by the acetyltransferase cm3C. Cm3A contains 13 domains and assembles the polyketide chain, L-phenylalanine, L-alanine, and D-leucine (or D-allo-isoleucine) to form beauveriolide I (or beauveriolide III). The production of both beauveriolides I and III suggests the substrate adaptability of cm3B, using different amino acids as substrates. In Cordyceps militaris (strain CM01) (Caterpillar fungus), this protein is Acyl-CoA ligase cm3C.